We begin with the raw amino-acid sequence, 24 residues long: MLKLHGFSVSNYYNMVKLALLEKG.

Belongs to the GST superfamily. As to quaternary structure, monomer and homodimer.

It is found in the cytoplasm. The enzyme catalyses RX + glutathione = an S-substituted glutathione + a halide anion + H(+). Functionally, conjugation of reduced glutathione to a wide number of exogenous and endogenous hydrophobic electrophiles. This chain is Glutathione S-transferase, found in Pseudomonas sp. (strain CF600).